A 285-amino-acid chain; its full sequence is MKFLLQQIRNMHVKPIKMRWLTGGVNYSYLLSTEDRRNSWLIDPAEPLEVSPKLSAEEKKSIDAIVNTHHHYDHSGGNLALYSILCQENSGHDIKIIGGSKSSPGVTEVPDNLQQYHLGNLRVTCIRTPCHTKDSICYYIKDLETGEQCIFTGDTLFIAGCGRFFEGTGRDMDMALNQIMLRAVGETNWNKVKIYPGHEYTKGNVSFIRAKIYSDIGQNKEFDALEQYCKSNECTTGHFTLRDELGYNPFMRLDDRAVRLAVGDTAGTYPRSVVMQELRKLKNAM.

The N-terminal 10 residues, 1–10 (MKFLLQQIRN), are a transit peptide targeting the mitochondrion. 7 residues coordinate Zn(2+): H69, H71, D73, H74, H131, D154, and H198.

The cofactor is Zn(2+).

The protein resides in the mitochondrion matrix. The catalysed reaction is an S-(2-hydroxyacyl)glutathione + H2O = a 2-hydroxy carboxylate + glutathione + H(+). The enzyme catalyses (R)-S-lactoylglutathione + H2O = (R)-lactate + glutathione + H(+). It functions in the pathway secondary metabolite metabolism; methylglyoxal degradation; (R)-lactate from methylglyoxal: step 2/2. Inhibited by various thiol compounds such as glutathione and coenzyme A. In terms of biological role, thiolesterase that catalyzes the hydrolysis of S-D-lactoylglutathione to form glutathione and D-lactic acid. Involved in the metabolism of methylglyoxal, a toxic compound for yeast proliferation, by converting methylglyoxal to lactate via S-D-lactoylglutathione by sequential enzyme reactions catalyzed by glyoxalase I and glyoxalase II. In Saccharomyces cerevisiae (strain ATCC 204508 / S288c) (Baker's yeast), this protein is Hydroxyacylglutathione hydrolase, mitochondrial.